The following is a 147-amino-acid chain: Response regulator Rcp1 (147 aa).

Residues 10–135 form the Response regulatory domain; it reads VILLVEDSKA…DLFKMVQGIE (126 aa). The residue at position 68 (aspartate 68) is a 4-aspartylphosphate.

Phosphorylated by Cph1.

In terms of biological role, forms a two-component system with Cph1 in which it acts as receiver substrate. This is Response regulator Rcp1 (rcp1) from Synechocystis sp. (strain ATCC 27184 / PCC 6803 / Kazusa).